The sequence spans 39 residues: Natriuretic peptide CnNP-b (39 aa).

Residues 1–8 (SGSKTATK) constitute a propeptide that is removed on maturation. A disulfide bond links Cys12 and Cys28. The disordered stretch occupies residues 20-39 (IGSTSGMGCGGVPKPTPGGS).

It belongs to the natriuretic peptide family. In terms of tissue distribution, expressed by the venom gland.

It is found in the secreted. Snake venom natriuretic peptide that targets both NPR1 and NPR2. Exhibits hypotensive and vasodepressor activities. The sequence is that of Natriuretic peptide CnNP-b from Cryptophis nigrescens (Eastern small-eyed snake).